We begin with the raw amino-acid sequence, 252 residues long: Large ribosomal subunit protein uL29m (252 aa).

Lysine 146 is subject to N6-acetyllysine.

This sequence belongs to the universal ribosomal protein uL29 family. As to quaternary structure, component of the mitochondrial ribosome large subunit (39S) which comprises a 16S rRNA and about 50 distinct proteins.

The protein resides in the mitochondrion. This Bos taurus (Bovine) protein is Large ribosomal subunit protein uL29m (MRPL47).